The sequence spans 335 residues: Glucokinase (335 aa).

11-16 (ADIGGT) is an ATP binding site.

This sequence belongs to the bacterial glucokinase family.

The protein resides in the cytoplasm. It carries out the reaction D-glucose + ATP = D-glucose 6-phosphate + ADP + H(+). This is Glucokinase from Xanthomonas axonopodis pv. citri (strain 306).